Here is a 339-residue protein sequence, read N- to C-terminus: Ketol-acid reductoisomerase (NADP(+)) (339 aa).

A KARI N-terminal Rossmann domain is found at 1 to 182 (MRVYYDRDAD…GGGRSGIIET (182 aa)). Residues 24–27 (YGSQ), lysine 48, serine 51, threonine 53, and 83–86 (DELQ) contribute to the NADP(+) site. Residue histidine 108 is part of the active site. Glycine 134 is a binding site for NADP(+). The KARI C-terminal knotted domain maps to 183–328 (TFQEECETDL…AKLRGMMPWI (146 aa)). Residues aspartate 191, glutamate 195, glutamate 227, and glutamate 231 each contribute to the Mg(2+) site. Residue serine 252 participates in substrate binding.

Belongs to the ketol-acid reductoisomerase family. The cofactor is Mg(2+).

It catalyses the reaction (2R)-2,3-dihydroxy-3-methylbutanoate + NADP(+) = (2S)-2-acetolactate + NADPH + H(+). It carries out the reaction (2R,3R)-2,3-dihydroxy-3-methylpentanoate + NADP(+) = (S)-2-ethyl-2-hydroxy-3-oxobutanoate + NADPH + H(+). It participates in amino-acid biosynthesis; L-isoleucine biosynthesis; L-isoleucine from 2-oxobutanoate: step 2/4. Its pathway is amino-acid biosynthesis; L-valine biosynthesis; L-valine from pyruvate: step 2/4. In terms of biological role, involved in the biosynthesis of branched-chain amino acids (BCAA). Catalyzes an alkyl-migration followed by a ketol-acid reduction of (S)-2-acetolactate (S2AL) to yield (R)-2,3-dihydroxy-isovalerate. In the isomerase reaction, S2AL is rearranged via a Mg-dependent methyl migration to produce 3-hydroxy-3-methyl-2-ketobutyrate (HMKB). In the reductase reaction, this 2-ketoacid undergoes a metal-dependent reduction by NADPH to yield (R)-2,3-dihydroxy-isovalerate. This Allorhizobium ampelinum (strain ATCC BAA-846 / DSM 112012 / S4) (Agrobacterium vitis (strain S4)) protein is Ketol-acid reductoisomerase (NADP(+)).